The following is a 363-amino-acid chain: 3-isopropylmalate dehydrogenase (363 aa).

Position 79-92 (79-92 (GPKWEHLPPNDQPE)) interacts with NAD(+). Substrate is bound by residues Arg100, Arg110, Arg139, and Asp228. Mg(2+) contacts are provided by Asp228, Asp252, and Asp256. NAD(+) is bound at residue 286 to 298 (GSAPDIAGKNIAN).

Belongs to the isocitrate and isopropylmalate dehydrogenases family. LeuB type 1 subfamily. In terms of assembly, homodimer. Mg(2+) serves as cofactor. Mn(2+) is required as a cofactor.

It is found in the cytoplasm. It catalyses the reaction (2R,3S)-3-isopropylmalate + NAD(+) = 4-methyl-2-oxopentanoate + CO2 + NADH. It functions in the pathway amino-acid biosynthesis; L-leucine biosynthesis; L-leucine from 3-methyl-2-oxobutanoate: step 3/4. In terms of biological role, catalyzes the oxidation of 3-carboxy-2-hydroxy-4-methylpentanoate (3-isopropylmalate) to 3-carboxy-4-methyl-2-oxopentanoate. The product decarboxylates to 4-methyl-2 oxopentanoate. The chain is 3-isopropylmalate dehydrogenase from Vibrio vulnificus (strain CMCP6).